Consider the following 432-residue polypeptide: Alpha-enolase (432 aa).

Position 40 (S40) interacts with Mg(2+). Substrate contacts are provided by H158 and E167. Catalysis depends on E210, which acts as the Proton donor. Mg(2+)-binding residues include D245, E293, and D318. E293 and D318 together coordinate substrate. The Proton acceptor role is filled by K343. Substrate contacts are provided by residues 370–373 (SHRS) and K394.

The protein belongs to the enolase family. As to quaternary structure, dimer. Mg(2+) serves as cofactor.

The protein localises to the cytoplasm. It catalyses the reaction (2R)-2-phosphoglycerate = phosphoenolpyruvate + H2O. Its pathway is carbohydrate degradation; glycolysis; pyruvate from D-glyceraldehyde 3-phosphate: step 4/5. In terms of biological role, multifunctional enzyme that, as well as its role in glycolysis, plays a part in various processes such as growth control, hypoxia tolerance and allergic responses. The sequence is that of Alpha-enolase from Thunnus albacares (Yellowfin tuna).